The following is a 90-amino-acid chain: Probable Fe(2+)-trafficking protein (90 aa).

It belongs to the Fe(2+)-trafficking protein family.

In terms of biological role, could be a mediator in iron transactions between iron acquisition and iron-requiring processes, such as synthesis and/or repair of Fe-S clusters in biosynthetic enzymes. In Herminiimonas arsenicoxydans, this protein is Probable Fe(2+)-trafficking protein.